The following is a 147-amino-acid chain: 3-dehydroquinate dehydratase (147 aa).

The active-site Proton acceptor is Y24. Substrate-binding residues include N75, H81, and D88. H101 acts as the Proton donor in catalysis. Substrate is bound by residues 102 to 103 and R112; that span reads IS.

The protein belongs to the type-II 3-dehydroquinase family. In terms of assembly, homododecamer.

It catalyses the reaction 3-dehydroquinate = 3-dehydroshikimate + H2O. Its pathway is metabolic intermediate biosynthesis; chorismate biosynthesis; chorismate from D-erythrose 4-phosphate and phosphoenolpyruvate: step 3/7. Functionally, catalyzes a trans-dehydration via an enolate intermediate. The polypeptide is 3-dehydroquinate dehydratase (Cereibacter sphaeroides (strain ATCC 17029 / ATH 2.4.9) (Rhodobacter sphaeroides)).